A 281-amino-acid chain; its full sequence is Transcription factor E2F6 (281 aa).

Lys-9 participates in a covalent cross-link: Glycyl lysine isopeptide (Lys-Gly) (interchain with G-Cter in SUMO2). The DNA-binding element occupies 50–129; it reads YVSMRKALKV…SKNHIRWIGS (80 aa). The DEF box signature appears at 95-129; it reads KLGVRKRRVYDITNVLDGIDLVEKKSKNHIRWIGS. Positions 130–222 are dimerization; it reads DLSNFGAVPQ…PAPREDSITV (93 aa). The segment at 143–164 is leucine-zipper; sequence LQEELSDLSAMEDALDELIKDC. The interval 173–281 is transcription repression; sequence DDKENERLAY…QSEELLEVSN (109 aa). The segment at 241–281 is disordered; sequence GQTSNKRSEGVGTSSSESTHPEGPEEEENPQQSEELLEVSN.

Belongs to the E2F/DP family. In terms of assembly, forms heterodimers with DP family members TFDP1 or TFDP2. Component of the DRTF1/E2F transcription factor complex. Part of the E2F6.com-1 complex in G0 phase composed of E2F6, MGA, MAX, TFDP1, CBX3, BAT8, EUHMTASE1, RING1, RNF2, MBLR, L3MBTL2 and YAF2. Component of some MLL1/MLL complex, at least composed of the core components KMT2A/MLL1, ASH2L, HCFC1/HCF1, WDR5 and RBBP5, as well as the facultative components BACC1, CHD8, E2F6, HSP70, INO80C, KANSL1, LAS1L, MAX, MCRS1, MGA, KAT8/MOF, PELP1, PHF20, PRP31, RING2, RUVB1/TIP49A, RUVB2/TIP49B, SENP3, TAF1, TAF4, TAF6, TAF7, TAF9 and TEX10. As to expression, expressed in all tissues examined. Highest levels in placenta, skeletal muscle, heart, ovary, kidney, small intestine and spleen.

The protein localises to the nucleus. Its function is as follows. Inhibitor of E2F-dependent transcription. Binds DNA cooperatively with DP proteins through the E2 recognition site, 5'-TTTC[CG]CGC-3'. Has a preference for the 5'-TTTCCCGC-3' E2F recognition site. E2F6 lacks the transcriptional activation and pocket protein binding domains. Appears to regulate a subset of E2F-dependent genes whose products are required for entry into the cell cycle but not for normal cell cycle progression. Represses expression of some meiosis-specific genes, including SLC25A31/ANT4. May silence expression via the recruitment of a chromatin remodeling complex containing histone H3-K9 methyltransferase activity. Overexpression delays the exit of cells from the S-phase. This is Transcription factor E2F6 from Homo sapiens (Human).